Consider the following 327-residue polypeptide: Voltage-dependent calcium channel gamma-4 subunit (327 aa).

The Cytoplasmic portion of the chain corresponds to 1–9; the sequence is MVRCDRGLQ. The chain crosses the membrane as a helical span at residues 10–30; that stretch reads MLLTTAGAFAAFSLMAIAIGT. Topologically, residues 31 to 107 are extracellular; sequence DYWLYSSAHI…EYLLRIVRAS (77 aa). Residues Asn42 and Asn45 are each glycosylated (N-linked (GlcNAc...) asparagine). A helical membrane pass occupies residues 108–128; it reads SVFPILSTILLLLGGLCIGAG. The Cytoplasmic segment spans residues 129–136; sequence RIYSRKNN. A helical transmembrane segment spans residues 137-157; it reads IVLSAGILFVAAGLSNIIGII. Residues 158–186 are Extracellular-facing; it reads VYISSNTGDPSDKRDEDKKNHYNYGWSFY. A helical membrane pass occupies residues 187–207; sequence FGALSFIVAETVGVLAVNIYI. The Cytoplasmic segment spans residues 208 to 327; that stretch reads EKNKELRFKT…SMLNRRTTPV (120 aa). The segment at 235-261 is disordered; that stretch reads SYRYRRRRSRSSSRSTEASPSRDVSPM. Low complexity predominate over residues 246–256; sequence SSRSTEASPSR. The residue at position 259 (Ser259) is a Phosphoserine.

The protein belongs to the PMP-22/EMP/MP20 family. CACNG subfamily. As to quaternary structure, interacts with CACNA1C. Identified in a complex with the L-type calcium channel subunits CACNA1C, CACNA2D1 and either CACNB1 or CACNB2. Acts as an auxiliary subunit for AMPA-selective glutamate receptors (AMPARs). Interacts with GRIA1. In terms of tissue distribution, detected in heart left ventricle.

It localises to the cell membrane. Functionally, regulates the activity of L-type calcium channels that contain CACNA1C as pore-forming subunit. Regulates the trafficking and gating properties of AMPA-selective glutamate receptors (AMPARs), including GRIA1 and GRIA4. Promotes their targeting to the cell membrane and synapses and modulates their gating properties by slowing their rates of activation, deactivation and desensitization and by mediating their resensitization. This is Voltage-dependent calcium channel gamma-4 subunit (CACNG4) from Homo sapiens (Human).